A 447-amino-acid chain; its full sequence is Methylenetetrahydrofolate--tRNA-(uracil-5-)-methyltransferase TrmFO (447 aa).

FAD is bound at residue 13–18 (GAGLAG).

Belongs to the MnmG family. TrmFO subfamily. It depends on FAD as a cofactor.

It is found in the cytoplasm. It catalyses the reaction uridine(54) in tRNA + (6R)-5,10-methylene-5,6,7,8-tetrahydrofolate + NADH + H(+) = 5-methyluridine(54) in tRNA + (6S)-5,6,7,8-tetrahydrofolate + NAD(+). The enzyme catalyses uridine(54) in tRNA + (6R)-5,10-methylene-5,6,7,8-tetrahydrofolate + NADPH + H(+) = 5-methyluridine(54) in tRNA + (6S)-5,6,7,8-tetrahydrofolate + NADP(+). Functionally, catalyzes the folate-dependent formation of 5-methyl-uridine at position 54 (M-5-U54) in all tRNAs. In Streptococcus thermophilus (strain ATCC BAA-250 / LMG 18311), this protein is Methylenetetrahydrofolate--tRNA-(uracil-5-)-methyltransferase TrmFO.